A 430-amino-acid polypeptide reads, in one-letter code: Glutamate-1-semialdehyde 2,1-aminomutase (430 aa).

K265 carries the N6-(pyridoxal phosphate)lysine modification.

This sequence belongs to the class-III pyridoxal-phosphate-dependent aminotransferase family. HemL subfamily. As to quaternary structure, homodimer. Pyridoxal 5'-phosphate is required as a cofactor.

The protein localises to the cytoplasm. The enzyme catalyses (S)-4-amino-5-oxopentanoate = 5-aminolevulinate. The protein operates within porphyrin-containing compound metabolism; protoporphyrin-IX biosynthesis; 5-aminolevulinate from L-glutamyl-tRNA(Glu): step 2/2. The protein is Glutamate-1-semialdehyde 2,1-aminomutase of Shewanella oneidensis (strain ATCC 700550 / JCM 31522 / CIP 106686 / LMG 19005 / NCIMB 14063 / MR-1).